The primary structure comprises 108 residues: Large ribosomal subunit protein bL31B (108 aa).

Residues 86-108 form a disordered region; sequence KPETVVEDVLPKGKKKSPAKKKK. Residues 97 to 108 show a composition bias toward basic residues; sequence KGKKKSPAKKKK.

Belongs to the bacterial ribosomal protein bL31 family. Type B subfamily. In terms of assembly, part of the 50S ribosomal subunit.

The chain is Large ribosomal subunit protein bL31B from Chlamydia trachomatis serovar L2 (strain ATCC VR-902B / DSM 19102 / 434/Bu).